A 331-amino-acid polypeptide reads, in one-letter code: Nucleotide-binding protein SGR_5570 (331 aa).

The interval 1-43 (MTENTHETAPNTADTDTADFDTADTDRADGAADVSTNTPNETG) is disordered. 55-62 (GMSGAGRS) lines the ATP pocket. 106–109 (DVRG) lines the GTP pocket.

It belongs to the RapZ-like family.

In terms of biological role, displays ATPase and GTPase activities. This is Nucleotide-binding protein SGR_5570 from Streptomyces griseus subsp. griseus (strain JCM 4626 / CBS 651.72 / NBRC 13350 / KCC S-0626 / ISP 5235).